A 159-amino-acid polypeptide reads, in one-letter code: Large ribosomal subunit protein uL10 (159 aa).

Belongs to the universal ribosomal protein uL10 family. As to quaternary structure, part of the ribosomal stalk of the 50S ribosomal subunit. The N-terminus interacts with L11 and the large rRNA to form the base of the stalk. The C-terminus forms an elongated spine to which L12 dimers bind in a sequential fashion forming a multimeric L10(L12)X complex.

Its function is as follows. Forms part of the ribosomal stalk, playing a central role in the interaction of the ribosome with GTP-bound translation factors. This Campylobacter jejuni (strain RM1221) protein is Large ribosomal subunit protein uL10.